A 397-amino-acid chain; its full sequence is Protein shisa-8 (397 aa).

An N-terminal signal peptide occupies residues 1–38 (MARAGARGLLGGRRPPGLRLALALRLALLLARPPSGRA). The Extracellular segment spans residues 39–138 (GAPEAQGPAA…APRDPGRERS (100 aa)). Residue N75 is glycosylated (N-linked (GlcNAc...) asparagine). The segment at 117–136 (TGRPPARARDTAAPRDPGRE) is disordered. Residues 123–136 (RARDTAAPRDPGRE) show a composition bias toward basic and acidic residues. A helical transmembrane segment spans residues 139–159 (HTAVYAVCGVAALLVLAGIGA). Residues 160–397 (RLGLERAHSP…RTNSKTEVTV (238 aa)) are Cytoplasmic-facing. Disordered regions lie at residues 182-250 (LLKQ…GGSL) and 281-303 (FPALEPSPRQPPARAPRPSPDLP). Pro residues-rich tracts occupy residues 188-197 (PQEPLPPTLG) and 288-303 (PRQPPARAPRPSPDLP).

This sequence belongs to the shisa family. In terms of assembly, interacts with AMPAR subunits GRIA1 and GRIA2.

The protein resides in the membrane. Functionally, may regulate trafficking and current kinetics of AMPA-type glutamate receptor (AMPAR) at synapses. In Homo sapiens (Human), this protein is Protein shisa-8.